A 488-amino-acid polypeptide reads, in one-letter code: Probable malate:quinone oxidoreductase (488 aa).

Belongs to the MQO family. FAD serves as cofactor.

It catalyses the reaction (S)-malate + a quinone = a quinol + oxaloacetate. It participates in carbohydrate metabolism; tricarboxylic acid cycle; oxaloacetate from (S)-malate (quinone route): step 1/1. The protein is Probable malate:quinone oxidoreductase of Neisseria meningitidis serogroup B (strain ATCC BAA-335 / MC58).